A 275-amino-acid polypeptide reads, in one-letter code: Phosphate import ATP-binding protein PstB 3 (275 aa).

The segment at 1 to 26 (MATQETDDSLISTDVQTDATERGDQP) is disordered. A compositionally biased stretch (polar residues) spans 9-18 (SLISTDVQTD). One can recognise an ABC transporter domain in the interval 31–270 (VETKHLDVHY…PEDDRVEDYI (240 aa)). 63 to 70 (GPSGCGKS) serves as a coordination point for ATP.

Belongs to the ABC transporter superfamily. Phosphate importer (TC 3.A.1.7) family. In terms of assembly, the complex is composed of two ATP-binding proteins (PstB), two transmembrane proteins (PstC and PstA) and a solute-binding protein (PstS).

It is found in the cell membrane. It carries out the reaction phosphate(out) + ATP + H2O = ADP + 2 phosphate(in) + H(+). Its function is as follows. Part of the ABC transporter complex PstSACB involved in phosphate import. Responsible for energy coupling to the transport system. This Natronomonas pharaonis (strain ATCC 35678 / DSM 2160 / CIP 103997 / JCM 8858 / NBRC 14720 / NCIMB 2260 / Gabara) (Halobacterium pharaonis) protein is Phosphate import ATP-binding protein PstB 3.